A 335-amino-acid polypeptide reads, in one-letter code: Lipoyl synthase (335 aa).

A compositionally biased stretch (polar residues) spans 1-13; it reads MTIDTNPESSTPS. The disordered stretch occupies residues 1 to 29; that stretch reads MTIDTNPESSTPSAPAYNPSEKQKGSAKT. Residues Cys75, Cys80, Cys86, Cys101, Cys105, Cys108, and Ser315 each coordinate [4Fe-4S] cluster. The 219-residue stretch at 86–304 folds into the Radical SAM core domain; it reads CFGKGTATFM…EEEAYKMGFA (219 aa).

Belongs to the radical SAM superfamily. Lipoyl synthase family. Requires [4Fe-4S] cluster as cofactor.

It is found in the cytoplasm. The catalysed reaction is [[Fe-S] cluster scaffold protein carrying a second [4Fe-4S](2+) cluster] + N(6)-octanoyl-L-lysyl-[protein] + 2 oxidized [2Fe-2S]-[ferredoxin] + 2 S-adenosyl-L-methionine + 4 H(+) = [[Fe-S] cluster scaffold protein] + N(6)-[(R)-dihydrolipoyl]-L-lysyl-[protein] + 4 Fe(3+) + 2 hydrogen sulfide + 2 5'-deoxyadenosine + 2 L-methionine + 2 reduced [2Fe-2S]-[ferredoxin]. It participates in protein modification; protein lipoylation via endogenous pathway; protein N(6)-(lipoyl)lysine from octanoyl-[acyl-carrier-protein]: step 2/2. In terms of biological role, catalyzes the radical-mediated insertion of two sulfur atoms into the C-6 and C-8 positions of the octanoyl moiety bound to the lipoyl domains of lipoate-dependent enzymes, thereby converting the octanoylated domains into lipoylated derivatives. The chain is Lipoyl synthase from Herminiimonas arsenicoxydans.